Here is a 303-residue protein sequence, read N- to C-terminus: Quinolinate synthase (303 aa).

Iminosuccinate-binding residues include His23 and Ser40. Residue Cys85 coordinates [4Fe-4S] cluster. Iminosuccinate is bound by residues 111–113 (YVN) and Ser128. Residue Cys171 participates in [4Fe-4S] cluster binding. Residues 197-199 (HPE) and Thr214 contribute to the iminosuccinate site. Residue Cys259 participates in [4Fe-4S] cluster binding.

Belongs to the quinolinate synthase family. Type 2 subfamily. [4Fe-4S] cluster serves as cofactor.

It localises to the cytoplasm. The enzyme catalyses iminosuccinate + dihydroxyacetone phosphate = quinolinate + phosphate + 2 H2O + H(+). The protein operates within cofactor biosynthesis; NAD(+) biosynthesis; quinolinate from iminoaspartate: step 1/1. Its function is as follows. Catalyzes the condensation of iminoaspartate with dihydroxyacetone phosphate to form quinolinate. This Thermodesulfovibrio yellowstonii (strain ATCC 51303 / DSM 11347 / YP87) protein is Quinolinate synthase.